We begin with the raw amino-acid sequence, 188 residues long: Probable RNA 2'-phosphotransferase (188 aa).

This sequence belongs to the KptA/TPT1 family.

Functionally, removes the 2'-phosphate from RNA via an intermediate in which the phosphate is ADP-ribosylated by NAD followed by a presumed transesterification to release the RNA and generate ADP-ribose 1''-2''-cyclic phosphate (APPR&gt;P). May function as an ADP-ribosylase. In Lacticaseibacillus paracasei (strain ATCC 334 / BCRC 17002 / CCUG 31169 / CIP 107868 / KCTC 3260 / NRRL B-441) (Lactobacillus paracasei), this protein is Probable RNA 2'-phosphotransferase.